Here is a 311-residue protein sequence, read N- to C-terminus: Aspartate carbamoyltransferase catalytic subunit (311 aa).

Carbamoyl phosphate contacts are provided by R58 and T59. L-aspartate is bound at residue K86. Carbamoyl phosphate contacts are provided by R108, H136, and Q139. The L-aspartate site is built by R169 and R224. Carbamoyl phosphate is bound by residues G265 and P266.

This sequence belongs to the aspartate/ornithine carbamoyltransferase superfamily. ATCase family. As to quaternary structure, heterododecamer (2C3:3R2) of six catalytic PyrB chains organized as two trimers (C3), and six regulatory PyrI chains organized as three dimers (R2).

It catalyses the reaction carbamoyl phosphate + L-aspartate = N-carbamoyl-L-aspartate + phosphate + H(+). Its pathway is pyrimidine metabolism; UMP biosynthesis via de novo pathway; (S)-dihydroorotate from bicarbonate: step 2/3. In terms of biological role, catalyzes the condensation of carbamoyl phosphate and aspartate to form carbamoyl aspartate and inorganic phosphate, the committed step in the de novo pyrimidine nucleotide biosynthesis pathway. The polypeptide is Aspartate carbamoyltransferase catalytic subunit (Geotalea daltonii (strain DSM 22248 / JCM 15807 / FRC-32) (Geobacter daltonii)).